We begin with the raw amino-acid sequence, 483 residues long: Matrix metalloproteinase-20 (483 aa).

The signal sequence occupies residues methionine 1 to alanine 22. The propeptide occupies alanine 23–asparagine 107. Positions proline 98–valine 105 match the Cysteine switch motif. Cysteine 100 contacts Zn(2+). The Ca(2+) site is built by glutamate 164, alanine 165, and aspartate 166. 2 residues coordinate Zn(2+): histidine 176 and aspartate 178. Ca(2+) is bound by residues aspartate 183, glycine 184, arginine 186, and threonine 188. Zn(2+) is bound at residue histidine 191. Residues glutamate 197, glycine 198, glycine 200, and aspartate 202 each coordinate Ca(2+). Histidine 204 is a Zn(2+) binding site. Positions 206 and 209 each coordinate Ca(2+). Histidine 226 contributes to the Zn(2+) binding site. The active site involves glutamate 227. Residues histidine 230 and histidine 236 each contribute to the Zn(2+) site. Hemopexin repeat units follow at residues proline 293–leucine 343, methionine 344–arginine 389, valine 391–valine 439, and asparagine 440–cysteine 483. An intrachain disulfide couples cysteine 296 to cysteine 483.

The protein belongs to the peptidase M10A family. Zn(2+) serves as cofactor. Requires Ca(2+) as cofactor. Post-translationally, autoactivates at least at the 107-Asn-|-Tyr-108 site. In terms of tissue distribution, expressed specifically in the enamel organ.

The protein resides in the secreted. The protein localises to the extracellular space. It localises to the extracellular matrix. In terms of biological role, degrades amelogenin, the major protein component of the enamel matrix and two of the macromolecules characterizing the cartilage extracellular matrix: aggrecan and the cartilage oligomeric matrix protein (COMP). May play a central role in tooth enamel formation. Cleaves aggrecan at the '360-Asn-|-Phe-361' site. The sequence is that of Matrix metalloproteinase-20 (MMP20) from Homo sapiens (Human).